A 273-amino-acid chain; its full sequence is ComE operon protein 4 (273 aa).

It belongs to the pyrroline-5-carboxylate reductase family.

Dispensable for transformability. Not known if it can act as a pyrroline-5-carboxylate reductase. This Bacillus subtilis (strain 168) protein is ComE operon protein 4 (comER).